A 277-amino-acid chain; its full sequence is Myelin proteolipid protein (277 aa).

At G2–R9 the chain is on the cytoplasmic side. Residues C6, C7, and C10 are each lipidated (S-palmitoyl cysteine). A helical transmembrane segment spans residues C10–G36. Residues H37–N63 are Extracellular-facing. The chain crosses the membrane as a helical span at residues V64 to A88. The Cytoplasmic portion of the chain corresponds to E89 to K151. C109 carries S-palmitoyl cysteine lipidation. At S114 the chain carries Phosphoserine. Residues T116 and T118 each carry the phosphothreonine modification. Residues C139 and C141 are each lipidated (S-palmitoyl cysteine). A helical membrane pass occupies residues F152–Y177. At F178–F233 the chain is on the extracellular side. 2 disulfide bridges follow: C184–C228 and C201–C220. S199 carries the O-palmitoyl serine lipid modification. A helical transmembrane segment spans residues Q234–A260. Residues A261–F277 are Cytoplasmic-facing.

This sequence belongs to the myelin proteolipid protein family. As to quaternary structure, interacts with MAL.

It localises to the cell membrane. The protein resides in the myelin membrane. Functionally, this is the major myelin protein from the central nervous system. It plays an important role in the formation or maintenance of the multilamellar structure of myelin. This chain is Myelin proteolipid protein (Plp1), found in Mus musculus (Mouse).